The following is a 163-amino-acid chain: Protein-export protein SecB (163 aa).

This sequence belongs to the SecB family. In terms of assembly, homotetramer, a dimer of dimers. One homotetramer interacts with 1 SecA dimer.

The protein resides in the cytoplasm. One of the proteins required for the normal export of preproteins out of the cell cytoplasm. It is a molecular chaperone that binds to a subset of precursor proteins, maintaining them in a translocation-competent state. It also specifically binds to its receptor SecA. The chain is Protein-export protein SecB from Brucella anthropi (strain ATCC 49188 / DSM 6882 / CCUG 24695 / JCM 21032 / LMG 3331 / NBRC 15819 / NCTC 12168 / Alc 37) (Ochrobactrum anthropi).